The sequence spans 298 residues: Probable pyridoxal 5'-phosphate synthase subunit SNZ3 (298 aa).

Aspartate 21 is a D-ribose 5-phosphate binding site. Lysine 78 acts as the Schiff-base intermediate with D-ribose 5-phosphate in catalysis. Residues glycine 150, glycine 213, and 234-235 contribute to the D-ribose 5-phosphate site; that span reads GS.

Belongs to the PdxS/SNZ family. Homohexamer. Interacts with THI11.

The enzyme catalyses aldehydo-D-ribose 5-phosphate + D-glyceraldehyde 3-phosphate + L-glutamine = pyridoxal 5'-phosphate + L-glutamate + phosphate + 3 H2O + H(+). It participates in cofactor biosynthesis; pyridoxal 5'-phosphate biosynthesis. Catalyzes the formation of pyridoxal 5'-phosphate from ribose 5-phosphate (RBP), glyceraldehyde 3-phosphate (G3P) and ammonia. The ammonia is provided by a SNO isoform. Can also use ribulose 5-phosphate and dihydroxyacetone phosphate as substrates, resulting from enzyme-catalyzed isomerization of RBP and G3P, respectively. This is Probable pyridoxal 5'-phosphate synthase subunit SNZ3 (SNZ3) from Saccharomyces cerevisiae (strain ATCC 204508 / S288c) (Baker's yeast).